The chain runs to 416 residues: Multifunctional CCA protein (416 aa).

ATP-binding residues include G8 and R11. Residues G8 and R11 each coordinate CTP. Mg(2+) contacts are provided by D21 and D23. ATP-binding residues include R91, R137, and R140. The CTP site is built by R91, R137, and R140. Residues 226-327 (TGVHIMLVID…VNLLERCDAF (102 aa)) enclose the HD domain.

Belongs to the tRNA nucleotidyltransferase/poly(A) polymerase family. Bacterial CCA-adding enzyme type 1 subfamily. Monomer. Can also form homodimers and oligomers. Mg(2+) is required as a cofactor. The cofactor is Ni(2+).

It catalyses the reaction a tRNA precursor + 2 CTP + ATP = a tRNA with a 3' CCA end + 3 diphosphate. The enzyme catalyses a tRNA with a 3' CCA end + 2 CTP + ATP = a tRNA with a 3' CCACCA end + 3 diphosphate. Its function is as follows. Catalyzes the addition and repair of the essential 3'-terminal CCA sequence in tRNAs without using a nucleic acid template. Adds these three nucleotides in the order of C, C, and A to the tRNA nucleotide-73, using CTP and ATP as substrates and producing inorganic pyrophosphate. tRNA 3'-terminal CCA addition is required both for tRNA processing and repair. Also involved in tRNA surveillance by mediating tandem CCA addition to generate a CCACCA at the 3' terminus of unstable tRNAs. While stable tRNAs receive only 3'-terminal CCA, unstable tRNAs are marked with CCACCA and rapidly degraded. The sequence is that of Multifunctional CCA protein from Janthinobacterium sp. (strain Marseille) (Minibacterium massiliensis).